Reading from the N-terminus, the 344-residue chain is tRNA N6-adenosine threonylcarbamoyltransferase (344 aa).

Residues H118 and H122 each contribute to the Fe cation site. Residues 141 to 145 (TASGG), D174, G187, and N284 contribute to the substrate site. D312 serves as a coordination point for Fe cation.

The protein belongs to the KAE1 / TsaD family. Fe(2+) is required as a cofactor.

The protein resides in the cytoplasm. The enzyme catalyses L-threonylcarbamoyladenylate + adenosine(37) in tRNA = N(6)-L-threonylcarbamoyladenosine(37) in tRNA + AMP + H(+). Its function is as follows. Required for the formation of a threonylcarbamoyl group on adenosine at position 37 (t(6)A37) in tRNAs that read codons beginning with adenine. Is involved in the transfer of the threonylcarbamoyl moiety of threonylcarbamoyl-AMP (TC-AMP) to the N6 group of A37, together with TsaE and TsaB. TsaD likely plays a direct catalytic role in this reaction. The protein is tRNA N6-adenosine threonylcarbamoyltransferase of Desulfotalea psychrophila (strain LSv54 / DSM 12343).